A 6629-amino-acid polypeptide reads, in one-letter code: Replicase polyprotein 1ab (6629 aa).

Over 1-1750 (MASSLKQGVS…VASYKTVLCK (1750 aa)) the chain is Cytoplasmic. The Ubiquitin-like 1 domain maps to 675–780 (KTVTFGETTV…SCHLIYRDYE (106 aa)). The tract at residues 783 to 802 (DDIEEEDAEECDTDSGEAEE) is disordered. A Macro domain is found at 1003–1179 (VKPATCEKPK…YFDVTCKQKT (177 aa)). A Ubiquitin-like 2 domain is found at 1175-1227 (CKQKTIYLTEDGVKYRSIVLKPGDSLGQFGQVYAKNKIVFTADDVEDKEILYV). The 262-residue stretch at 1236–1497 (EYYGLDAQKY…SKSVKEDVSN (262 aa)) folds into the Peptidase C16 domain. The active-site For PL-PRO activity is C1274. Zn(2+)-binding residues include C1353, C1355, C1387, and C1390. The C4-type; degenerate zinc-finger motif lies at 1353–1390 (CNCGIKSYELRGLEACIQPVRATNLLHFKTQYSNCPTC). Catalysis depends on for PL-PRO activity residues H1437 and D1448. The helical transmembrane segment at 1751-1771 (VVLATLLIVWFVYTSNPVMFT) threads the bilayer. The interval 1751 to 1864 (VVLATLLIVW…KPVAGFVIIC (114 aa)) is HD1. One can recognise a 3Ecto domain in the interval 1769–1833 (MFTGIRVLDF…AYSVEQVYKD (65 aa)). Residues 1772 to 1843 (GIRVLDFLFE…AASGFIFNWN (72 aa)) lie on the Lumenal side of the membrane. 2 cysteine pairs are disulfide-bonded: C1785/C1811 and C1802/C1808. Residues 1844–1864 (WLYLVFLILFVKPVAGFVIIC) form a helical membrane-spanning segment. At 1865 to 2280 (YCVKYLVLNS…TFKCFKSYFK (416 aa)) the chain is on the cytoplasmic side. Residues 1911–2001 (YIQVHHILYC…KLKRHVKPTA (91 aa)) are Y1. In terms of domain architecture, CoV Nsp3 Y spans 1911–2263 (YIQVHHILYC…HTQKLLVEKK (353 aa)). H1915, C1920, C1925, C1928, C1961, H1964, C1968, and C1971 together coordinate Zn(2+). The interval 1915–1928 (HHILYCKDVTCEVC) is ZF1. The interval 1961–1971 (CKRHNWYCRNC) is ZF2. Residues 2002–2104 (YAYHVVDEAC…ILDQALYEQL (103 aa)) form a Y2 region. The tract at residues 2002-2263 (YAYHVVDEAC…HTQKLLVEKK (262 aa)) is coV-Y. The Y3 stretch occupies residues 2105 to 2163 (VVEPVSKSVIDKVCSILSSIISVDTAALNYKAGTLRDALLSITKDEEAVDMAIFCHNHD). Residues 2164–2263 (VDYTGDGFTN…HTQKLLVEKK (100 aa)) are Y4. Residues 2281–2301 (WLLIFYILFTACCSGYYYMEV) form a helical membrane-spanning segment. The HD2 stretch occupies residues 2281–2664 (WLLIFYILFT…LACCYLGFII (384 aa)). Residues 2302–2559 (SKSFVHPMYD…FFTGVNPNIY (258 aa)) lie on the Lumenal side of the membrane. Residues 2560–2580 (MQLATMFLILVVVVLIFAMVI) traverse the membrane as a helical segment. At 2581-2611 (KFQGVFKAYATTVFITMLVWVINAFILCVHS) the chain is on the cytoplasmic side. Residues 2612-2632 (YNSVLAVILLVLYCYASLVTS) traverse the membrane as a helical segment. The Lumenal portion of the chain corresponds to 2633–2643 (RNTVIIMHCWL). The helical transmembrane segment at 2644 to 2664 (VFTFGLIVPTWLACCYLGFII) threads the bilayer. Over 2665–3096 (YMYTPLFLWC…SSFVRKATSW (432 aa)) the chain is Cytoplasmic. The region spanning 2684–2779 (LYDGNEFVGN…RYSIGVSRLQ (96 aa)) is the Nsp4C domain. The 307-residue stretch at 2780 to 3086 (SGFKKLVSPS…FNQIGGVRLQ (307 aa)) folds into the Peptidase C30 domain. Catalysis depends on for 3CL-PRO activity residues H2820 and C2922. Residues 3097–3117 (FWSRCVLACFLFVLCAIVLFT) traverse the membrane as a helical segment. The tract at residues 3097 to 3317 (FWSRCVLACF…WLCTCYFGLY (221 aa)) is HD3. Residues 3118 to 3121 (AVPL) are Lumenal-facing. A helical membrane pass occupies residues 3122–3142 (KFYVYAAVILLMAVLFISFTV). Residues 3143–3151 (KHVMAYMDT) lie on the Cytoplasmic side of the membrane. The chain crosses the membrane as a helical span at residues 3152 to 3172 (FLLPTLITVIIGVCAEVPFIY). The Lumenal portion of the chain corresponds to 3173-3188 (NTLISQVVIFLSQWYD). Residues 3189–3209 (PVVFDTMVPWMFLPLVLYTAF) traverse the membrane as a helical segment. Over 3210 to 3257 (KCVQGCYMNSFNTSLLMLYQFVKLGFVIYTSSNTLTAYTEGNWELFFE) the chain is Cytoplasmic. A helical transmembrane segment spans residues 3258–3278 (LVHTTVLANVSSNSLIGLFVF). Over 3279–3296 (KCAKWMLYYCNATYLNNY) the chain is Lumenal. A helical transmembrane segment spans residues 3297–3317 (VLMAVMVNCIGWLCTCYFGLY). The Cytoplasmic portion of the chain corresponds to 3318-6629 (WWVNKVFGLT…FTSDSFVCTM (3312 aa)). The RdRp Nsp7 cofactor domain maps to 3380 to 3462 (AKLSDVKCTT…DILKRSTVLQ (83 aa)). A RdRp Nsp8 cofactor domain is found at 3463-3672 (SVTQEFSHIP…GHNKVDVVLQ (210 aa)). One can recognise a Nsp9 ssRNA-binding domain in the interval 3673-3783 (NNELMPHGVK…GAISNVVVLQ (111 aa)). Residues 3785–3926 (KGHETEEVDA…CDSLRQPKSS (142 aa)) enclose the ExoN/MTase coactivator domain. Residues C3858, C3861, H3867, C3878, C3904, C3907, C3915, and C3917 each coordinate Zn(2+). 2 zinc fingers span residues 3858 to 3878 (CLYC…DGRC) and 3904 to 3917 (CTVC…GCQC). The NiRAN domain occupies 3940–4198 (YLNRVRGSSE…APERYFEYDV (259 aa)). Residues 4203–4301 (KSYDLLKYDY…MNQDNTMSFS (99 aa)) form the Nsp12 Interface domain. The Zn(2+) site is built by H4232, C4238, C4243, C4247, and C4424. The Nsp12 RNA-dependent RNA polymerase domain maps to 4302–4868 (KMGLSQLMQF…NMYRAPTTLQ (567 aa)). The tract at residues 4304–4517 (GLSQLMQFVG…HQKILKSIVN (214 aa)) is rdRp Fingers N-ter. The interval 4518-4556 (TRNASVVIGTTKFYGGWDNMLRNLIQGVEDPILMGWDYP) is rdRp Palm N-ter. Positions 4548 to 4710 (PILMGWDYPK…CYNNTLAKQG (163 aa)) constitute a RdRp catalytic domain. The segment at 4557–4615 (KCDRAMPNLLRIAASLVLARKHTNCCSWSERIYRLYNECAQVLSETVLATGGIYVKPGG) is rdRp Fingers C-ter. Zn(2+) is bound by residues H4578, C4581, and C4582. The interval 4616–4751 (TSSGDATTAY…EKGPHEFCSQ (136 aa)) is rdRp Palm C-ter. Catalysis depends on residues S4695, D4696, and D4697. The interval 4752–4868 (HTMLVEVDGE…NMYRAPTTLQ (117 aa)) is rdRp Thumb. One can recognise a CV ZBD domain in the interval 4869 to 4981 (SCGVCVVCNS…DDFNQLATTN (113 aa)). Residues C4873, C4876, C4884, C4887, C4894, C4897, H4901, H4907, C4918, C4923, C4940, and H4943 each contribute to the Zn(2+) site. The (+)RNA virus helicase ATP-binding domain occupies 5125-5305 (MVPECFVNNI…MVCVKPDIFL (181 aa)). 5150–5157 (GPPGSGKS) serves as a coordination point for ATP. The region spanning 5306-5477 (AKCYRCPKEI…QGTGLFKICN (172 aa)) is the (+)RNA virus helicase C-terminal domain. The region spanning 5539–5753 (MFITRDEAIR…RCLAINNAFC (215 aa)) is the ExoN domain. Residues D5557, E5559, and E5658 contribute to the active site. Positions 5674, 5676, 5692, 5695, 5723, 5727, and 5730 each coordinate Zn(2+). Catalysis depends on residues H5734 and D5739. A Zn(2+)-binding site is contributed by C5745. Residues 5762 to 5989 (YPHIANEDEV…NLWKSFSALQ (228 aa)) form the N7-MTase domain. Position 5797–5803 (5797–5803 (DIGNPKG)) interacts with S-adenosyl-L-methionine. A gpppA-binding region spans residues 5877 to 5891 (CNGGSLYVNKHAFYT). 4 residues coordinate Zn(2+): C5915, C5935, C5946, and H5949. The Nsp15 N-terminal oligomerization domain maps to 5990 to 6050 (SIDNIAYNMY…SVAFELYAKR (61 aa)). Residues 6051 to 6166 (NIRTLPNNRI…VYKRVNGAFV (116 aa)) form the AV-Nsp11N/CoV-Nsp15M domain. Residues 6183–6324 (EPRSDIERDF…EDGSIKTCYP (142 aa)) form the NendoU domain. Residues H6212, H6227, K6267, K6371, D6455, K6499, and E6532 contribute to the active site. One can recognise a Nidovirus-type SAM-dependent 2'-O-MTase domain in the interval 6327–6626 (QSAWTCGYNM…NTSFTSDSFV (300 aa)).

It belongs to the coronaviruses polyprotein 1ab family. As to quaternary structure, interacts with host PHB and PHB2. Interacts with papain-like protease and non-structural protein 6. In terms of assembly, monomer. Homodimer. Only the homodimer shows catalytic activity. As to quaternary structure, eight copies of nsp7 and eight copies of nsp8 assemble to form a heterohexadecamer dsRNA-encircling ring structure. Eight copies of nsp7 and eight copies of nsp8 assemble to form a heterohexadecamer dsRNA-encircling ring structure. Interacts with ORF6 protein. In terms of assembly, homodimer. As to quaternary structure, homododecamer. Interacts with proofreading exoribonuclease nsp14 and 2'-O-methyltransferase nsp16; these interactions enhance nsp14 and nsp16 enzymatic activities. Interacts with host DDX1 (via C-terminus). Interacts with non-structural protein 10. In terms of assembly, homohexamer. As to quaternary structure, interacts with non-structural protein 10. It depends on Mn(2+) as a cofactor. Zn(2+) is required as a cofactor. In terms of processing, specific enzymatic cleavages in vivo by its own proteases yield mature proteins. 3C-like proteinase nsp5 liberates nsps 6-16 from the polyprotein. Papain-like and 3C-like proteinases are autocatalytically processed. Post-translationally, N-glycosylated.

Its subcellular location is the host endoplasmic reticulum membrane. The protein localises to the host cytoplasm. The protein resides in the host perinuclear region. It localises to the host endoplasmic reticulum. It is found in the host endoplasmic reticulum-Golgi intermediate compartment. It catalyses the reaction Thiol-dependent hydrolysis of ester, thioester, amide, peptide and isopeptide bonds formed by the C-terminal Gly of ubiquitin (a 76-residue protein attached to proteins as an intracellular targeting signal).. The catalysed reaction is RNA(n) + a ribonucleoside 5'-triphosphate = RNA(n+1) + diphosphate. The enzyme catalyses ATP + H2O = ADP + phosphate + H(+). It carries out the reaction uridylyl-uridylyl-ribonucleotide-RNA = a 3'-end uridylyl-2',3'-cyclophospho-uridine-RNA + a 5'-end dephospho-ribonucleoside-RNA. It catalyses the reaction a 5'-end diphospho-ribonucleoside in mRNA + GTP + H(+) = a 5'-end (5'-triphosphoguanosine)-ribonucleoside in mRNA + diphosphate. The catalysed reaction is a 5'-end (N(7)-methyl 5'-triphosphoguanosine)-ribonucleoside in mRNA + S-adenosyl-L-methionine = a 5'-end (N(7)-methyl 5'-triphosphoguanosine)-(2'-O-methyl-ribonucleoside) in mRNA + S-adenosyl-L-homocysteine + H(+). In terms of biological role, multifunctional protein involved in the transcription and replication of viral RNAs. Contains the proteinases responsible for the cleavages of the polyprotein. Its function is as follows. May play a role in the modulation of host cell survival signaling pathway by interacting with host PHB and PHB2. Indeed, these two proteins play a role in maintaining the functional integrity of the mitochondria and protecting cells from various stresses. Functionally, responsible for the cleavages located at the N-terminus of the replicase polyprotein. In addition, PL-PRO possesses a deubiquitinating/deISGylating activity and processes both 'Lys-48'- and 'Lys-63'-linked polyubiquitin chains from cellular substrates. Plays a role in host membrane rearrangement that leads to creation of cytoplasmic double-membrane vesicles (DMV) necessary for viral replication. Alone is able to induce paired membranes. Coexpression of nsp3 and nsp4 does not result in the formation of DMVs. In terms of biological role, responsible for the majority of cleavages as it cleaves the C-terminus of replicase polyprotein at 11 sites. Recognizes substrates containing the core sequence [ILMVF]-Q-|-[SGACN]. Inhibited by the substrate-analog Cbz-Val-Asn-Ser-Thr-Leu-Gln-CMK. Its function is as follows. Forms a hexadecamer with nsp8 (8 subunits of each) that may participate in viral replication by acting as a primase. Alternatively, may synthesize substantially longer products than oligonucleotide primers. Functionally, forms a hexadecamer with nsp7 (8 subunits of each) that may participate in viral replication by acting as a primase. Alternatively, may synthesize substantially longer products than oligonucleotide primers. Forms a primer, NSP9-pU, which is utilized by the polymerase for the initiation of RNA chains. Interacts with ribosome signal recognition particle RNA (SRP). Together with NSP8, suppress protein integration into the cell membrane, thereby disrupting host immune defenses. In terms of biological role, plays a pivotal role in viral transcription by stimulating both nsp14 3'-5' exoribonuclease and nsp16 2'-O-methyltransferase activities. Therefore plays an essential role in viral mRNAs cap methylation. Its function is as follows. RNA-directed RNA polymerase that catalyzes the transcription of viral genomic and subgenomic RNAs. Acts in complex with nsp7 and nsp8 to transcribe both the minus and positive strands of genomic RNA. The kinase-like NiRAN domain of NSP12 attaches one or more nucleotides to the amino terminus of NSP9, forming a covalent RNA-protein intermediate that serves as transcription/replication primer. Subgenomic RNAs (sgRNAs) are formed by discontinuous transcription: The polymerase has the ability to pause at transcription-regulating sequences (TRS) and jump to the leader TRS, resulting in a major deletion. This creates a series of subgenomic RNAs that are replicated, transcribed and translated. In addition, Nsp12 is a subunit of the viral RNA capping enzyme that catalyzes the RNA guanylyltransferase reaction for genomic and sub-genomic RNAs. Subsequently, the NiRAN domain transfers RNA to GDP, and forms the core cap structure GpppA-RNA. Functionally, multi-functional protein with a zinc-binding domain in N-terminus displaying RNA and DNA duplex-unwinding activities with 5' to 3' polarity. Activity of helicase is dependent on magnesium. Enzyme possessing two different activities: an exoribonuclease activity acting on both ssRNA and dsRNA in a 3' to 5' direction and a N7-guanine methyltransferase activity. Acts as a proofreading exoribonuclease for RNA replication, thereby lowering The sensitivity of the virus to RNA mutagens. In terms of biological role, plays a role in viral transcription/replication and prevents the simultaneous activation of host cell dsRNA sensors, such as MDA5/IFIH1, OAS, and PKR. Acts by degrading the 5'-polyuridines generated during replication of the poly(A) region of viral genomic and subgenomic RNAs. Catalyzes a two-step reaction in which a 2'3'-cyclic phosphate (2'3'-cP) is first generated by 2'-O transesterification, which is then hydrolyzed to a 3'-phosphate (3'-P). If not degraded, poly(U) RNA would hybridize with poly(A) RNA tails and activate host dsRNA sensors. Its function is as follows. Methyltransferase that mediates mRNA cap 2'-O-ribose methylation to the 5'-cap structure of viral mRNAs. N7-methyl guanosine cap is a prerequisite for binding of nsp16. Therefore plays an essential role in viral mRNAs cap methylation which is essential to evade immune system. The chain is Replicase polyprotein 1ab (rep) from Gallus gallus (Chicken).